A 1420-amino-acid polypeptide reads, in one-letter code: DNA-directed RNA polymerase subunit beta' (1420 aa).

Zn(2+)-binding residues include C71, C73, C86, and C89. Positions 461, 463, and 465 each coordinate Mg(2+). Residues C815, C889, C896, and C899 each contribute to the Zn(2+) site.

The protein belongs to the RNA polymerase beta' chain family. In terms of assembly, the RNAP catalytic core consists of 2 alpha, 1 beta, 1 beta' and 1 omega subunit. When a sigma factor is associated with the core the holoenzyme is formed, which can initiate transcription. The cofactor is Mg(2+). Requires Zn(2+) as cofactor.

The catalysed reaction is RNA(n) + a ribonucleoside 5'-triphosphate = RNA(n+1) + diphosphate. Functionally, DNA-dependent RNA polymerase catalyzes the transcription of DNA into RNA using the four ribonucleoside triphosphates as substrates. This is DNA-directed RNA polymerase subunit beta' from Histophilus somni (strain 129Pt) (Haemophilus somnus).